We begin with the raw amino-acid sequence, 310 residues long: Tyrosine recombinase XerC (310 aa).

One can recognise a Core-binding (CB) domain in the interval 1 to 92 (MDELIKEFDR…SLRAFFKYLH (92 aa)). The Tyr recombinase domain occupies 113–300 (YIPAVLSVDE…SVNRLMAVYD (188 aa)). Residues Arg153, Lys177, His252, Arg255, and His278 contribute to the active site. Tyr287 functions as the O-(3'-phospho-DNA)-tyrosine intermediate in the catalytic mechanism.

This sequence belongs to the 'phage' integrase family. XerC subfamily. In terms of assembly, forms a cyclic heterotetrameric complex composed of two molecules of XerC and two molecules of XerD.

It is found in the cytoplasm. Site-specific tyrosine recombinase, which acts by catalyzing the cutting and rejoining of the recombining DNA molecules. The XerC-XerD complex is essential to convert dimers of the bacterial chromosome into monomers to permit their segregation at cell division. It also contributes to the segregational stability of plasmids. In Syntrophus aciditrophicus (strain SB), this protein is Tyrosine recombinase XerC.